Here is a 158-residue protein sequence, read N- to C-terminus: 2-C-methyl-D-erythritol 2,4-cyclodiphosphate synthase (158 aa).

Residues D8 and H10 each coordinate a divalent metal cation. 4-CDP-2-C-methyl-D-erythritol 2-phosphate contacts are provided by residues 8 to 10 (DAH) and 34 to 35 (HS). An a divalent metal cation-binding site is contributed by H42. 4-CDP-2-C-methyl-D-erythritol 2-phosphate-binding positions include 56-58 (DIG), 132-135 (TTTE), and R142.

This sequence belongs to the IspF family. As to quaternary structure, homotrimer. Requires a divalent metal cation as cofactor.

It carries out the reaction 4-CDP-2-C-methyl-D-erythritol 2-phosphate = 2-C-methyl-D-erythritol 2,4-cyclic diphosphate + CMP. Its pathway is isoprenoid biosynthesis; isopentenyl diphosphate biosynthesis via DXP pathway; isopentenyl diphosphate from 1-deoxy-D-xylulose 5-phosphate: step 4/6. In terms of biological role, involved in the biosynthesis of isopentenyl diphosphate (IPP) and dimethylallyl diphosphate (DMAPP), two major building blocks of isoprenoid compounds. Catalyzes the conversion of 4-diphosphocytidyl-2-C-methyl-D-erythritol 2-phosphate (CDP-ME2P) to 2-C-methyl-D-erythritol 2,4-cyclodiphosphate (ME-CPP) with a corresponding release of cytidine 5-monophosphate (CMP). This Nitrosococcus oceani (strain ATCC 19707 / BCRC 17464 / JCM 30415 / NCIMB 11848 / C-107) protein is 2-C-methyl-D-erythritol 2,4-cyclodiphosphate synthase.